The chain runs to 334 residues: Protein CapI (334 aa).

A substrate-binding site is contributed by Ser-126. The active-site Proton acceptor is the Tyr-151.

It belongs to the NAD(P)-dependent epimerase/dehydratase family.

Its pathway is capsule biogenesis; capsule polysaccharide biosynthesis. Functionally, required for the biosynthesis of type 1 capsular polysaccharide. The sequence is that of Protein CapI (capI) from Staphylococcus aureus.